A 417-amino-acid polypeptide reads, in one-letter code: Sterile alpha motif domain-containing protein 14 (417 aa).

A disordered region spans residues 37-306 (LLVKGRRHRP…QETKCSYPYH (270 aa)). The segment covering 40-49 (KGRRHRPSRS) has biased composition (basic residues). Phosphoserine occurs at positions 84 and 108. The segment covering 138–153 (SGSPPRSAPSSDSSPS) has biased composition (low complexity). A compositionally biased stretch (basic and acidic residues) spans 159-173 (PRAEPHSEDDSRDAS). Phosphoserine occurs at positions 173 and 179. Low complexity-rich tracts occupy residues 244 to 260 (SGKG…PTCS) and 276 to 289 (STLS…SSSP). Phosphoserine is present on serine 279. Residue threonine 283 is modified to Phosphothreonine. The region spanning 326-389 (WTSQQVGQWL…KRKLKELAAA (64 aa)) is the SAM domain. The stretch at 375–416 (DRALVKRKLKELAAAAEKERKAQEKTARQREKLRRREHEAKK) forms a coiled coil. The disordered stretch occupies residues 390–417 (AEKERKAQEKTARQREKLRRREHEAKKS).

The sequence is that of Sterile alpha motif domain-containing protein 14 (Samd14) from Rattus norvegicus (Rat).